The following is a 377-amino-acid chain: Pyruvate dehydrogenase E1 component subunit alpha, mitochondrial (377 aa).

Residues 1-26 (MLSNFLKVNSKALGHIRTFASKSGEI) constitute a mitochondrion transit peptide. Pyruvate-binding residues include histidine 83, tyrosine 109, arginine 110, glycine 156, valine 158, aspartate 187, glycine 188, alanine 189, asparagine 216, and tyrosine 218. Thiamine diphosphate-binding residues include tyrosine 109, arginine 110, glycine 156, valine 158, aspartate 187, glycine 188, alanine 189, and asparagine 216. Residue aspartate 187 coordinates Mg(2+). Mg(2+) contacts are provided by asparagine 216 and tyrosine 218. Histidine 283 provides a ligand contact to thiamine diphosphate.

In terms of assembly, tetramer of 2 alpha and 2 beta subunits. The cofactor is thiamine diphosphate. Mg(2+) serves as cofactor.

It is found in the mitochondrion matrix. The catalysed reaction is N(6)-[(R)-lipoyl]-L-lysyl-[protein] + pyruvate + H(+) = N(6)-[(R)-S(8)-acetyldihydrolipoyl]-L-lysyl-[protein] + CO2. E1 activity is regulated by phosphorylation (inactivation) and dephosphorylation (activation) of the alpha subunit. Functionally, the pyruvate dehydrogenase complex catalyzes the overall conversion of pyruvate to acetyl-CoA and CO(2). It contains multiple copies of three enzymatic components: pyruvate dehydrogenase (E1), dihydrolipoamide acetyltransferase (E2) and lipoamide dehydrogenase (E3). This Dictyostelium discoideum (Social amoeba) protein is Pyruvate dehydrogenase E1 component subunit alpha, mitochondrial (pdhA).